Here is a 52-residue protein sequence, read N- to C-terminus: UPF0057 membrane protein At1g57550 (52 aa).

The next 2 membrane-spanning stretches (helical) occupy residues 4–24 (FLEVLCAIFIPPVGVFLRYGL) and 30–50 (VCLLLTLFAFIPGLIYAIYVL).

Belongs to the UPF0057 (PMP3) family.

The protein resides in the membrane. The sequence is that of UPF0057 membrane protein At1g57550 from Arabidopsis thaliana (Mouse-ear cress).